A 202-amino-acid polypeptide reads, in one-letter code: Small ribosomal subunit protein uS4c (202 aa).

The 63-residue stretch at 90–152 (MRLDNVIFRL…RKSESIINKN (63 aa)) folds into the S4 RNA-binding domain.

It belongs to the universal ribosomal protein uS4 family. Part of the 30S ribosomal subunit. Contacts protein S5. The interaction surface between S4 and S5 is involved in control of translational fidelity.

The protein resides in the plastid. The protein localises to the chloroplast. Its function is as follows. One of the primary rRNA binding proteins, it binds directly to 16S rRNA where it nucleates assembly of the body of the 30S subunit. With S5 and S12 plays an important role in translational accuracy. The sequence is that of Small ribosomal subunit protein uS4c (rps4) from Dendrohypopterygium filiculiforme (Moss).